The chain runs to 661 residues: Putative DUF21 domain-containing protein At3g13070, chloroplastic (661 aa).

The N-terminal 71 residues, 1-71 (MMGMALELSV…RSCEFSYRSR (71 aa)), are a transit peptide targeting the chloroplast. A run of 5 helical transmembrane segments spans residues 105–125 (GIVIGALVCGVFLYGCQKVLA), 162–182 (GLILAALLSLSAFFSMAETSI), 213–233 (FLTTILIGTTVVNIAATALVT), 239–259 (IFGEAGVSAATGLMTVAILLL), and 285–305 (WLSLVLYPVGRIVTYLSMGIL). The CNNM transmembrane domain occupies 154-340 (VLTVLREQGL…ELSGAIEEEE (187 aa)). CBS domains are found at residues 359 to 420 (MTPL…LLES) and 426 to 484 (MAHK…IFDE). 2 disordered regions span residues 559-578 (ESWEEDGEEEEGKQERQEPK) and 628-661 (SSEEDDGNLSNEEDQSENAVLDEHVLADNSKKQQ). Acidic residues-rich tracts occupy residues 560–570 (SWEEDGEEEEG) and 630–643 (EEDDGNLSNEEDQS). A compositionally biased stretch (basic and acidic residues) spans 648-661 (LDEHVLADNSKKQQ).

The protein localises to the plastid. The protein resides in the chloroplast membrane. The protein is Putative DUF21 domain-containing protein At3g13070, chloroplastic (CBSDUFCH1) of Arabidopsis thaliana (Mouse-ear cress).